The following is an 81-amino-acid chain: WPRGPDYTERRVMCGLQYVRAAISICGPNMQTMRPRNGSGPIVPPPDFLAMYGMARYKPPLSKKCCSTGCNREDFRGYCYL.

3 disulfides stabilise this stretch: C14-C66, C26-C79, and C65-C70. N-linked (GlcNAc...) asparagine glycosylation is present at N37.

The protein belongs to the insulin family. In terms of assembly, heterodimer of a B chain and an A chain linked by two disulfide bonds.

The protein resides in the secreted. Its function is as follows. Uncertain. The polypeptide is Relaxin-like protein AGF (Hypanus sabinus (Atlantic stingray)).